A 177-amino-acid chain; its full sequence is Ribulose bisphosphate carboxylase small subunit, chloroplastic 3 (177 aa).

Residues 1 to 56 constitute a chloroplast transit peptide; that stretch reads MASSMMASTAAAVARAGPAQSSMVPFNACRSSVPFPATRKANNNLSTLPGNGGRVS.

It belongs to the RuBisCO small chain family. Heterohexadecamer of 8 large and 8 small subunits.

Its subcellular location is the plastid. It localises to the chloroplast. RuBisCO catalyzes two reactions: the carboxylation of D-ribulose 1,5-bisphosphate, the primary event in carbon dioxide fixation, as well as the oxidative fragmentation of the pentose substrate. Both reactions occur simultaneously and in competition at the same active site. Although the small subunit is not catalytic it is essential for maximal activity. The sequence is that of Ribulose bisphosphate carboxylase small subunit, chloroplastic 3 from Lemna gibba (Swollen duckweed).